Consider the following 369-residue polypeptide: uncharacterized protein (369 aa).

Positions 1-35 (MQTNNPSYFFRSESALQDEKRKEEKSHNPNGNPRN) are disordered. Residues 17 to 27 (QDEKRKEEKSH) are compositionally biased toward basic and acidic residues. WD repeat units lie at residues 83–127 (GHSG…CVET), 130–169 (GHTDYVKCLLLLEEEGLLLSGSTDASLIVWDVSSQPSRLL), 174–213 (GHSRGIECITRQPNTDIFWTCGSESSIRCWHITKVGGSQL), 220–260 (GHQS…HEET), 263–301 (EHPDVCTDVLTLADGNIATACRDEEIRVWDTTTGNVKDI), and 304–341 (GHYESVTKILQWKSYLISSSLDQTIRVWDLEYSADNNE).

This is an uncharacterized protein from Schizosaccharomyces pombe (strain 972 / ATCC 24843) (Fission yeast).